A 94-amino-acid chain; its full sequence is Co-chaperonin GroES (94 aa).

It belongs to the GroES chaperonin family. In terms of assembly, heptamer of 7 subunits arranged in a ring. Interacts with the chaperonin GroEL.

It localises to the cytoplasm. In terms of biological role, together with the chaperonin GroEL, plays an essential role in assisting protein folding. The GroEL-GroES system forms a nano-cage that allows encapsulation of the non-native substrate proteins and provides a physical environment optimized to promote and accelerate protein folding. GroES binds to the apical surface of the GroEL ring, thereby capping the opening of the GroEL channel. The protein is Co-chaperonin GroES of Limosilactobacillus reuteri (strain DSM 20016) (Lactobacillus reuteri).